Consider the following 36-residue polypeptide: MTDLNLPSIFVPXVGLVFPAIAMASXFLHVQKNKIV.

A helical transmembrane segment spans residues 6–28; the sequence is LPSIFVPXVGLVFPAIAMASXFL.

The protein belongs to the PsaI family.

The protein resides in the plastid. Its subcellular location is the chloroplast thylakoid membrane. In terms of biological role, may help in the organization of the PsaL subunit. The chain is Photosystem I reaction center subunit VIII from Acorus gramineus (Dwarf sweet flag).